Reading from the N-terminus, the 354-residue chain is Protein OPG055 (354 aa).

This sequence belongs to the orthopoxvirus OPG055 family.

In terms of biological role, stimulates increases in peripheral microtubule dynamics and may increase the motility of the infected cells, contributing to cell-to-cell spread of the virus. Seems to inhibit the signaling via the GTPase RHOA and DIAPH1/mDia. The chain is Protein OPG055 (OPG055) from Cynomys gunnisoni (Gunnison's prairie dog).